Reading from the N-terminus, the 399-residue chain is Probable endo-xylogalacturonan hydrolase A (399 aa).

The signal sequence occupies residues M1–A19. PbH1 repeat units lie at residues T177–E207, S208–P229, C231–S251, V260–P283, and V293–S314. D222 (proton donor) is an active-site residue. H245 is an active-site residue. Residues N295 and N382 are each glycosylated (N-linked (GlcNAc...) asparagine).

Belongs to the glycosyl hydrolase 28 family.

It is found in the secreted. Pectinolytic enzyme involved in the degradation of xylogalacturonan (xga), a galacturonan backbone heavily substituted with xylose, and which is one important component of the hairy regions of pectin. Activity requires a galacturonic acid backbone substituted with xylose. The protein is Probable endo-xylogalacturonan hydrolase A (xghA) of Emericella nidulans (strain FGSC A4 / ATCC 38163 / CBS 112.46 / NRRL 194 / M139) (Aspergillus nidulans).